We begin with the raw amino-acid sequence, 1093 residues long: Synaptopodin-2 (1093 aa).

The interaction with VPS18 stretch occupies residues 1 to 180; the sequence is MGTGDFICIS…PDSQRGRVAE (180 aa). The PDZ domain occupies 6–88; sequence FICISMTGGA…SLQMLIKRPS (83 aa). 2 disordered regions span residues 144 to 174 and 211 to 233; these read ENQR…PDSQ and ASGP…DPNL. Residues 222–233 show a composition bias toward basic and acidic residues; sequence EKSKSPDPDPNL. Ser-274, Ser-310, Ser-329, and Ser-330 each carry phosphoserine. A disordered region spans residues 329–369; the sequence is SSEGTEQGEDPRSEKDHSRPHKHRARHARLRRSESLSEKQV. At Thr-333 the chain carries Phosphothreonine. Positions 346–358 are enriched in basic residues; the sequence is SRPHKHRARHARL. A compositionally biased stretch (basic and acidic residues) spans 359–369; the sequence is RRSESLSEKQV. Positions 398-406 match the Nuclear localization signal motif; that stretch reads KKRRRRARK. Interaction with ACTN2 stretches follow at residues 481 to 663, 664 to 924, and 901 to 1093; these read MEML…FYDS, SERI…PPVA, and QSPT…VVEE. Disordered stretches follow at residues 507-803 and 834-870; these read AQKE…GTVV and AVAS…GMSG. 2 F-actin binding regions span residues 534 to 663 and 664 to 803; these read TSYQ…FYDS and SERI…GTVV. Phosphoserine occurs at positions 548, 549, and 551. 2 stretches are compositionally biased toward polar residues: residues 565–579 and 595–611; these read PQQN…TANI and SVNQ…NMTS. The residue at position 604 (Ser-604) is a Phosphoserine. The interval 607 to 811 is interaction with YWHAB; that stretch reads RNMTSPIADF…VVSSIKIAQP (205 aa). Thr-610 is subject to Phosphothreonine. Residue Ser-611 is modified to Phosphoserine. Residues 615 to 626 form an interaction with BAG3 region; sequence DFPAPPPYSAVT. 2 stretches are compositionally biased toward pro residues: residues 617-630 and 644-655; these read PAPP…PPPD and AQPPPWPQPAPW. The PPPY motif signature appears at 619–622; it reads PPPY. Tyr-622 is subject to Phosphotyrosine. At Thr-626 the chain carries Phosphothreonine. The span at 663–674 shows a compositional bias: basic and acidic residues; it reads SSERIASRDERI. The F-actin bundling activity stretch occupies residues 664 to 916; that stretch reads SERIASRDER…LPASWKYSSN (253 aa). Ser-705 and Ser-729 each carry phosphoserine. Residues 751-900 form an actin binding region; sequence AKQKTPPPVA…DTVQAHAARA (150 aa). 2 positions are modified to phosphothreonine: Thr-755 and Thr-774. The segment covering 762–784 has biased composition (low complexity); the sequence is KPAVKSSSSQPVTPVSPVWSPGV. Phosphoserine occurs at positions 777 and 781. Composition is skewed to polar residues over residues 793–803 and 835–853; these read PTSNPSKGTVV and VASQ…TVNA. The segment at 810–1093 is interaction with FLNC; the sequence is QPSYPPARPA…QVWKPSVVEE (284 aa). A phosphoserine mark is found at Ser-902, Ser-906, and Ser-910. The disordered stretch occupies residues 937–956; that stretch reads ALKSQPSAAQPSKMGKKKGK. The segment at 1000-1019 is interaction with ZYX; the sequence is LAMKQALPPRPVNAASPTNV. Ser-1015 bears the Phosphoserine mark. The segment covering 1041–1050 has biased composition (low complexity); that stretch reads SSPVSASPVP. The segment at 1041–1064 is disordered; sequence SSPVSASPVPVGIPTSPKQESASS. Ser-1056 carries the post-translational modification Phosphoserine.

This sequence belongs to the synaptopodin family. As to quaternary structure, may self-associate in muscle cells under oxidative stress. Binds F-actin. Interacts with ACTN2; ACTN2 is proposed to anchor SYOP2 at Z lines in mature myocytes. Interacts with AKAP6, PPP3CA and CAMK2A. Interacts (phosphorylated form) with YWHAB; YWHAB competes with ACTN2 for interaction with SYNPO2. Interacts with KPNA2; mediating nuclear import of SYNOP2; dependent on interaction with YWHAB. Interacts with IPO13; may be implicated in SYNOP2 nuclear import. Interacts with ZYX, FLNC, ILK. Interacts with BAG3 (via WW 1 domain). May associate with the CASA complex consisting of HSPA8, HSPB8 and BAG3. Interacts with VPS18. In terms of processing, phosphorylated by PKA, and by CaMK2 at multiple sites. Dephosphorylated by calcineurin; abrogating interaction with YWHAB and impairing nuclear import. Phosphorylated by ILK. Expressed in heart muscle. Isoform 5 is specifically expressed in skeletal muscle.

It is found in the nucleus. The protein localises to the cytoplasm. It localises to the cytoskeleton. Its subcellular location is the myofibril. The protein resides in the sarcomere. It is found in the z line. The protein localises to the cell junction. It localises to the focal adhesion. Has an actin-binding and actin-bundling activity. Can induce the formation of F-actin networks in an isoform-specific manner. At the sarcomeric Z lines is proposed to act as adapter protein that links nascent myofibers to the sarcolemma via ZYX and may play a role in early assembly and stabilization of the Z lines. Involved in autophagosome formation. May play a role in chaperone-assisted selective autophagy (CASA) involved in Z lines maintenance in striated muscle under mechanical tension; may link the client-processing CASA chaperone machinery to a membrane-tethering and fusion complex providing autophagosome membranes. Involved in regulation of cell migration. May be a tumor suppressor. In terms of biological role, involved in regulation of cell migration. Can induce formation of thick, irregular actin bundles in the cell body. Its function is as follows. Involved in regulation of cell migration. Can induce long, well-organized actin bundles frequently orientated in parallel along the long axis of the cell showing characteristics of contractile ventral stress fibers. Functionally, involved in regulation of cell migration. Can induce an amorphous actin meshwork throughout the cell body containing a mixture of long and short, randomly organized thick and thin actin bundles. Can induce long, well-organized actin bundles frequently orientated in parallel along the long axis of the cell showing characteristics of contractile ventral stress fibers. In terms of biological role, involved in regulation of cell migration in part dependent on the Rho-ROCK cascade; can promote formation of nascent focal adhesions, actin bundles at the leading cell edge and lamellipodia. Can induce formation of thick, irregular actin bundles in the cell body; the induced actin network is associated with enhanced cell migration in vitro. This is Synaptopodin-2 (SYNPO2) from Homo sapiens (Human).